The following is a 444-amino-acid chain: Phosphoglucosamine mutase (444 aa).

Ser-100 (phosphoserine intermediate) is an active-site residue. Mg(2+)-binding residues include Ser-100, Asp-240, Asp-242, and Asp-244. At Ser-100 the chain carries Phosphoserine.

This sequence belongs to the phosphohexose mutase family. The cofactor is Mg(2+). In terms of processing, activated by phosphorylation.

It carries out the reaction alpha-D-glucosamine 1-phosphate = D-glucosamine 6-phosphate. In terms of biological role, catalyzes the conversion of glucosamine-6-phosphate to glucosamine-1-phosphate. This chain is Phosphoglucosamine mutase, found in Moorella thermoacetica (strain ATCC 39073 / JCM 9320).